Consider the following 445-residue polypeptide: Aminopeptidase S (445 aa).

The signal sequence occupies residues 1 to 45; the sequence is MRPNRFSLRRSPTAVAAVALAAVLAAGAPAAQAAGAAAPTAAAAA. Residues Asp-48 and Ile-49 each coordinate Ca(2+). Residues His-130 and Asp-142 each coordinate Zn(2+). The Proton acceptor role is filled by Glu-176. Residues Glu-177, Asp-205, and His-292 each coordinate Zn(2+). Cysteines 290 and 295 form a disulfide. Ca(2+) contacts are provided by Asp-307 and Asp-311. One can recognise a P/Homo B domain in the interval 325–445; that stretch reads GEPPTGEGVF…GYIDSWKLTF (121 aa). The propeptide at 330–445 is removed in mature form; that stretch reads GEGVFSNTTD…GYIDSWKLTF (116 aa).

It belongs to the peptidase M28 family. M28A subfamily. In terms of assembly, monomer. Ca(2+) serves as cofactor. Zn(2+) is required as a cofactor. Requires Mn(2+) as cofactor. It depends on Co(2+) as a cofactor.

Its subcellular location is the secreted. It carries out the reaction Release of an N-terminal amino acid with a preference for large hydrophobic amino-terminus residues.. Its activity is regulated as follows. Calcium activates the enzyme, inhibited by 1,10-phenanthroline, EDTA and EGTA. End-product inhibited by L-amino acids. Non-competitively inhibited by NaF and NaH(2)PO(4). An exopeptidase specific for larger hydrophobic amino acids (especially leucine), no cleavage occurs if the next residue is proline. This is Aminopeptidase S from Streptomyces griseus subsp. griseus (strain JCM 4626 / CBS 651.72 / NBRC 13350 / KCC S-0626 / ISP 5235).